The sequence spans 670 residues: Probable urocanate hydratase (670 aa).

NAD(+) contacts are provided by residues 126 to 127 (GG), Q204, 250 to 252 (GMS), E270, 316 to 317 (NV), 338 to 342 (QTSLH), 349 to 350 (FY), Y398, and G590.

This sequence belongs to the urocanase family. It depends on NAD(+) as a cofactor.

The enzyme catalyses 4-imidazolone-5-propanoate = trans-urocanate + H2O. It participates in amino-acid degradation; L-histidine degradation into L-glutamate; N-formimidoyl-L-glutamate from L-histidine: step 2/3. The polypeptide is Probable urocanate hydratase (Caenorhabditis elegans).